A 481-amino-acid polypeptide reads, in one-letter code: Probable Xaa-Pro aminopeptidase PEPP (481 aa).

Positions 265, 276, 399, and 439 each coordinate Mn(2+).

Belongs to the peptidase M24B family. Requires Mn(2+) as cofactor.

It carries out the reaction Release of any N-terminal amino acid, including proline, that is linked to proline, even from a dipeptide or tripeptide.. In terms of biological role, catalyzes the removal of a penultimate prolyl residue from the N-termini of peptides. In Uncinocarpus reesii (strain UAMH 1704), this protein is Probable Xaa-Pro aminopeptidase PEPP (PEPP).